The primary structure comprises 600 residues: Kelch-like protein 24 (600 aa).

A BTB domain is found at 66-133; the sequence is TDVIICVEGK…VYTGKVKITT (68 aa). A BACK domain is found at 168-270; sequence CLGIQRFADT…HPNYFVQTVE (103 aa). 6 Kelch repeats span residues 314 to 363, 365 to 407, 408 to 454, 456 to 502, 504 to 544, and 546 to 592; these read VIVV…ALRN, ILVS…VLLG, KVYV…SCIG, LFVI…SLNN, IYVA…VCNG, and IYIL…TIHR.

As to quaternary structure, forms homodimers. Interacts with GRIK2. Component of the BCR(KLHL24) E3 ubiquitin ligase complex, composed of CUL3, RBX1 and KLHL24. Interacts with CUL3. Interacts with KRT14. Autoubiquitinated. Autoubiquitination leads to proteasomal degradation and is necessary to control KLHL24 levels. In terms of tissue distribution, expressed in the brain.

Its subcellular location is the perikaryon. It is found in the cell projection. The protein resides in the axon. The protein localises to the cytoplasm. It localises to the cell junction. Its subcellular location is the desmosome. It is found in the adherens junction. In terms of biological role, controls KRT14 levels during keratinocytes differentiation. As part of the BCR(KLHL24) E3 ubiquitin ligase complex, mediates ubiquitination of KRT14. Specifically reduces kainate receptor-mediated currents in hippocampal neurons, most probably by modulating channel properties. Has a crucial role in cardiac development and function. This is Kelch-like protein 24 (Klhl24) from Mus musculus (Mouse).